A 750-amino-acid polypeptide reads, in one-letter code: Tyrosine-protein phosphatase 2 (750 aa).

The tract at residues Met-1–Met-20 is disordered. Ser-258 carries the phosphoserine modification. 2 disordered regions span residues Leu-327 to Tyr-348 and Val-425 to Tyr-450. Residues Lys-330–Tyr-348 show a composition bias toward polar residues. One can recognise a Tyrosine-protein phosphatase domain in the interval Ser-383–Tyr-737. Ser-430 carries the post-translational modification Phosphoserine. The active-site Phosphocysteine intermediate is the Cys-666.

The protein belongs to the protein-tyrosine phosphatase family. Non-receptor class subfamily. Interacts with HOG1.

Its subcellular location is the cytoplasm. It is found in the nucleus. It carries out the reaction O-phospho-L-tyrosyl-[protein] + H2O = L-tyrosyl-[protein] + phosphate. Major phosphatase responsible with PTP3 for tyrosine dephosphorylation of MAP kinase HOG1 to inactivate its activity. May also be involved in the regulation of MAP kinase FUS3. May be implicated in the ubiquitin-mediated protein degradation. This is Tyrosine-protein phosphatase 2 (PTP2) from Saccharomyces cerevisiae (strain ATCC 204508 / S288c) (Baker's yeast).